A 161-amino-acid chain; its full sequence is UPF0262 protein mll6455 (161 aa).

This sequence belongs to the UPF0262 family.

The sequence is that of UPF0262 protein mll6455 from Mesorhizobium japonicum (strain LMG 29417 / CECT 9101 / MAFF 303099) (Mesorhizobium loti (strain MAFF 303099)).